Consider the following 353-residue polypeptide: Quinolinate synthase (353 aa).

Residues histidine 47 and serine 68 each contribute to the iminosuccinate site. Cysteine 113 contacts [4Fe-4S] cluster. Iminosuccinate-binding positions include 139-141 (YAN) and serine 156. Cysteine 200 serves as a coordination point for [4Fe-4S] cluster. Residues 226–228 (HPE) and threonine 243 each bind iminosuccinate. Position 297 (cysteine 297) interacts with [4Fe-4S] cluster.

This sequence belongs to the quinolinate synthase family. Type 1 subfamily. Requires [4Fe-4S] cluster as cofactor.

The protein localises to the cytoplasm. It catalyses the reaction iminosuccinate + dihydroxyacetone phosphate = quinolinate + phosphate + 2 H2O + H(+). Its pathway is cofactor biosynthesis; NAD(+) biosynthesis; quinolinate from iminoaspartate: step 1/1. Its function is as follows. Catalyzes the condensation of iminoaspartate with dihydroxyacetone phosphate to form quinolinate. The chain is Quinolinate synthase from Yersinia pestis bv. Antiqua (strain Nepal516).